Here is a 285-residue protein sequence, read N- to C-terminus: Protoheme IX farnesyltransferase (285 aa).

9 helical membrane passes run I8–A28, Y36–F56, L80–I100, F107–F127, F133–A153, I163–M183, I209–L229, N232–I252, and F265–F285.

This sequence belongs to the UbiA prenyltransferase family. Protoheme IX farnesyltransferase subfamily.

It is found in the cell membrane. The enzyme catalyses heme b + (2E,6E)-farnesyl diphosphate + H2O = Fe(II)-heme o + diphosphate. The protein operates within porphyrin-containing compound metabolism; heme O biosynthesis; heme O from protoheme: step 1/1. Its function is as follows. Converts heme B (protoheme IX) to heme O by substitution of the vinyl group on carbon 2 of heme B porphyrin ring with a hydroxyethyl farnesyl side group. The polypeptide is Protoheme IX farnesyltransferase (Buchnera aphidicola subsp. Acyrthosiphon pisum (strain Tuc7)).